The following is a 22-amino-acid chain: Major outer membrane protein (22 aa).

Belongs to the Gram-negative porin family. In terms of assembly, disulfide bond interactions within and between MOMP molecules and other components form high molecular-weight oligomers.

The protein localises to the cell outer membrane. In terms of biological role, structural rigidity of the outer membrane of elementary bodies and porin forming, permitting diffusion of solutes through the intracellular reticulate body membrane. This Avibacterium gallinarum (Pasteurella gallinarum) protein is Major outer membrane protein (ompH).